The chain runs to 1958 residues: Echinoderm microtubule-associated protein-like 6 (1958 aa).

10 WD repeats span residues 59–100 (GHND…TVSL), 104–145 (VHTH…LLAS), 148–187 (GHSD…LTAK), 195–233 (GDLQ…RTIQ), 235–273 (AHSA…TKID), 280–321 (GYKG…LILQ), 323–362 (HCEG…LIAR), 364–403 (NMEE…EVVH), 406–445 (DRKE…KKIG), and 561–601 (GHSA…VSNG). The segment at 603-626 (LETAPQEGGADSYSEESDSDLSDV) is disordered. The span at 615 to 626 (YSEESDSDLSDV) shows a compositional bias: acidic residues. 10 WD repeats span residues 725-766 (GHDD…CLSL), 770-811 (QHQR…KIAT), 814-853 (GHKD…FTSK), 861-900 (GKLE…KTVK), 901-940 (AHDG…KTYA), 996-1035 (HMEG…RMLA), 1038-1077 (KLKK…DMVS), 1080-1120 (HRKE…RVGI), 1191-1230 (SDIT…QHAR), and 1236-1276 (GHSA…TQES). A compositionally biased stretch (basic and acidic residues) spans 1322–1337 (KPHQQLKEVSVEERPP). Residues 1322 to 1353 (KPHQQLKEVSVEERPPVSRAAPQPEKLQKNNI) form a disordered region. 10 WD repeats span residues 1412–1456 (EHTD…TLSM), 1460–1501 (FHSK…KVAS), 1504–1543 (GHLE…LLYK), 1553–1591 (AKMQ…RLVA), 1593–1638 (AHTG…CRAF), 1685–1724 (HMEG…LLNK), 1726–1767 (SLGH…GKKR), 1768–1807 (DRKS…NLNR), 1880–1919 (ADKA…KFAK), and 1925–1958 (GHSA…WRCL).

Belongs to the WD repeat EMAP family.

The protein localises to the cytoplasm. It localises to the cytoskeleton. Its function is as follows. May modify the assembly dynamics of microtubules, such that microtubules are slightly longer, but more dynamic. In Homo sapiens (Human), this protein is Echinoderm microtubule-associated protein-like 6 (EML6).